Reading from the N-terminus, the 346-residue chain is fMet-Leu-Phe receptor (346 aa).

N-linked (GlcNAc...) asparagine glycans are attached at residues Asn-1 and Asn-7. Residues 1 to 24 (NSSLPTNISGGTPAVSAGYLFLDI) are Extracellular-facing. The helical transmembrane segment at 25 to 47 (VTYLVFAVTFVLGVLGNGLVIWV) threads the bilayer. The Cytoplasmic segment spans residues 48-58 (AGFRMTHTVTT). A helical transmembrane segment spans residues 59 to 80 (ISYLNLAVADFCFTSTLPFFMV). At 81 to 97 (KKAMGGHWPFGWFLCKF) the chain is on the extracellular side. Cys-95 and Cys-173 form a disulfide bridge. The chain crosses the membrane as a helical span at residues 98–118 (IFTIVDINLFGSVFLIALIAL). The Cytoplasmic portion of the chain corresponds to 119 to 137 (DRCVCVLHPVWTQNHRTVS). Residues 138 to 159 (LAKKVIIGPWVMALLLTLPVII) traverse the membrane as a helical segment. Over 160–202 (RVTTVPGKMGTVACTFNFSPWTNDPKERIKVAVAMLTVRGIIR) the chain is Extracellular. Residues 203 to 223 (FIIGFSAPMSIVAVSYGLIAT) traverse the membrane as a helical segment. Over 224 to 239 (KIDKQGLIKSSRTLRV) the chain is Cytoplasmic. The chain crosses the membrane as a helical span at residues 240-263 (LSFVAAAFFLSWSPYQVVALIATV). The Extracellular segment spans residues 264-282 (RIRELLQGMYKEIGIAVDV). A helical membrane pass occupies residues 283–302 (TSALAFFNSCLNPMLYVFMG). At 303-346 (QDFRERLIHALPASLERALTEDSTQTSDTATNSTLPSAEVALQA) the chain is on the cytoplasmic side. Positions 322-346 (TEDSTQTSDTATNSTLPSAEVALQA) are disordered. The span at 323 to 338 (EDSTQTSDTATNSTLP) shows a compositional bias: polar residues.

It belongs to the G-protein coupled receptor 1 family. Post-translationally, phosphorylated; which is necessary for desensitization.

It localises to the cell membrane. Functionally, high affinity receptor for N-formyl-methionyl peptides (fMLP), which are powerful neutrophil chemotactic factors. Binding of fMLP to the receptor stimulates intracellular calcium mobilization and superoxide anion release. This response is mediated via a G-protein that activates a phosphatidylinositol-calcium second messenger system. Receptor for TAFA4, mediates its effects on chemoattracting macrophages, promoting phagocytosis and increasing ROS release. Receptor for cathepsin CTSG, leading to increased phagocyte chemotaxis. The polypeptide is fMet-Leu-Phe receptor (FPR1) (Gorilla gorilla gorilla (Western lowland gorilla)).